The chain runs to 532 residues: Probable 1,4-beta-D-glucan cellobiohydrolase B (532 aa).

Positions 1 to 26 (MLASTFSYRMYKTALILAALLGSGQA) are cleaved as a signal peptide. A catalytic region spans residues 27–461 (QQVGTSQAEV…SNIKVGPIGS (435 aa)). E238 (nucleophile) is an active-site residue. E243 functions as the Proton donor in the catalytic mechanism. N296 carries N-linked (GlcNAc...) asparagine glycosylation. Residues 462–495 (TFNSGGSNPGGGTTTTTTTQPTTTTTTAGNPGGT) are disordered. The thr-rich linker stretch occupies residues 462-496 (TFNSGGSNPGGGTTTTTTTQPTTTTTTAGNPGGTG). Low complexity predominate over residues 475-490 (TTTTTTQPTTTTTTAG). The region spanning 496 to 532 (GVAQHYGQCGGIGWTGPTTCASPYTCQKLNDYYSQCL) is the CBM1 domain. 2 disulfide bridges follow: C504/C521 and C515/C531.

It belongs to the glycosyl hydrolase 7 (cellulase C) family.

It is found in the secreted. The enzyme catalyses Hydrolysis of (1-&gt;4)-beta-D-glucosidic linkages in cellulose and cellotetraose, releasing cellobiose from the non-reducing ends of the chains.. Its function is as follows. The biological conversion of cellulose to glucose generally requires three types of hydrolytic enzymes: (1) Endoglucanases which cut internal beta-1,4-glucosidic bonds; (2) Exocellobiohydrolases that cut the disaccharide cellobiose from the non-reducing end of the cellulose polymer chain; (3) Beta-1,4-glucosidases which hydrolyze the cellobiose and other short cello-oligosaccharides to glucose. This chain is Probable 1,4-beta-D-glucan cellobiohydrolase B (cbhB), found in Aspergillus fumigatus (strain CBS 144.89 / FGSC A1163 / CEA10) (Neosartorya fumigata).